Here is a 123-residue protein sequence, read N- to C-terminus: Small ribosomal subunit protein uS12 (123 aa).

D89 carries the 3-methylthioaspartic acid modification.

This sequence belongs to the universal ribosomal protein uS12 family. In terms of assembly, part of the 30S ribosomal subunit. Contacts proteins S8 and S17. May interact with IF1 in the 30S initiation complex.

In terms of biological role, with S4 and S5 plays an important role in translational accuracy. Functionally, interacts with and stabilizes bases of the 16S rRNA that are involved in tRNA selection in the A site and with the mRNA backbone. Located at the interface of the 30S and 50S subunits, it traverses the body of the 30S subunit contacting proteins on the other side and probably holding the rRNA structure together. The combined cluster of proteins S8, S12 and S17 appears to hold together the shoulder and platform of the 30S subunit. In Bradyrhizobium diazoefficiens (strain JCM 10833 / BCRC 13528 / IAM 13628 / NBRC 14792 / USDA 110), this protein is Small ribosomal subunit protein uS12.